Here is a 658-residue protein sequence, read N- to C-terminus: Probable CoA ligase CCL6 (658 aa).

ATP contacts are provided by residues 226-234 (TSGATGEPK), 411-416 (QGYGLT), D497, 509-512 (IIDR), and K632. Residues 298-411 (DIRFLMDDLQ…RVTSCAALSQ (114 aa)) form an SBD1 region. Residues 412–477 (GYGLTESCGG…LRGTTLFSGY (66 aa)) form an SBD2 region.

It belongs to the ATP-dependent AMP-binding enzyme family. Mostly expressed in glandular trichomes (lupulin glands) after flowering, and, to a lower extent, in stems, leaves, cones and flowers.

Its subcellular location is the cytoplasm. The protein localises to the cytosol. This chain is Probable CoA ligase CCL6, found in Humulus lupulus (European hop).